The sequence spans 195 residues: Transmembrane protein 126A (195 aa).

Topologically, residues 1-33 (MENHKSNNKENITIVDISRKINQLPEAERNLLE) are mitochondrial matrix. Residues 34–54 (NGSVYVGLNAALCGLIANSLF) form a helical membrane-spanning segment. At 55–56 (RR) the chain is on the mitochondrial intermembrane side. A helical transmembrane segment spans residues 57–77 (ILNVTKARIAAGLPMAGIPFL). Topologically, residues 78–110 (TTDLTYRCFVSFPLNTGDLDCETCTITRSGLTG) are mitochondrial matrix. The chain crosses the membrane as a helical span at residues 111–131 (LVIGGLYPVFLAIPVNGGLAA). At 132-158 (RYQSALLPHKGNILSYWIRTSKPVFRK) the chain is on the mitochondrial intermembrane side. The chain crosses the membrane as a helical span at residues 159-175 (MLFPILLQTMFSAYLGS). Residues 176–195 (EQYKLLIKALQLSEPGKEIH) lie on the Mitochondrial matrix side of the membrane.

It belongs to the TMEM126 family. As to quaternary structure, interacts with OXA1L; promoting cotranslational quality control in mitochondria. In terms of tissue distribution, strongly expressed in brain, cerebellum, skeletal muscle, testis. High expression also found in fetal brain, fetal retinal pigmentary epithelium, and fetal retina. Highly expressed in retinal ganglion cells.

Its subcellular location is the mitochondrion inner membrane. Functionally, protein required for the cotranslational protein quality control in the inner membrane of the mitochondria. Associates with newly synthesized polypeptides and may act as a chaperone that cooperates with OXA1L for the insertion of newly synthesized mitochondrial proteins into the inner membrane. Required for the assembly of the ND4 module of mitochondrial complex I. This chain is Transmembrane protein 126A, found in Homo sapiens (Human).